The chain runs to 641 residues: MRSTSTFTRTPAFLLHTLARWLLVWGVLGSSVVAEKKCASNYYVRSLPGQPDGPLLKMHAGHVEVDHKNNGNLFFWHFQNRHIANRQRTVIWLNGGPGCSSMDGALMEIGPYRLKDDHTLIYNEGSWDEFANILFVDQPVGTGFSYVNTNSYIHELDEMASHFVTFLEKWFELFPEYEHDDLYFAGESYAGQYIPYIAKAILDRNKNTTTQAQSRLWNLKGLLIGNGWISPVEQYQAYLTYAYKENLIQSGTDAAKRVERAHSECISELDSGGKDRIHAGACEKVLSAVLEVTRENGKCINMYDIRLRDEFPSCGMNWPPDLKHITPYLRRDDVISALHVNDDKRTGWRECTGAVSSNFNARNSKPSVQLLPEILESGIPITLFSGAKDFICNHIGTEQFIHNMQWSGGTGFELSPGVWAPRHDWTFEGEAAGYYQEARNLTYVLFYNASHMVPFDFGRRSRDMLDRFLGVDITSIGGNPADSRIDGEKGALTSVGNHPNSTTAEQREKEKLKAATWAAYYKSGEVALVVVAIAAAVWGFFIWRSRRQRQGSGYRGIYPNLNGLSSGSFSGFRNKRSSHDDIEAAADFDASELDTLRGTDDRSRGANGHGSVGGDSEDEDEKFGAQKESYHPSNMPSSSSS.

Positions 1–34 (MRSTSTFTRTPAFLLHTLARWLLVWGVLGSSVVA) are cleaved as a signal peptide. Over 35–522 (EKKCASNYYV…KAATWAAYYK (488 aa)) the chain is Lumenal. Serine 188 is a catalytic residue. Residue asparagine 207 is glycosylated (N-linked (GlcNAc...) asparagine). Aspartate 389 is an active-site residue. N-linked (GlcNAc...) asparagine glycosylation is found at asparagine 440 and asparagine 448. Histidine 451 is an active-site residue. The interval 486 to 506 (DGEKGALTSVGNHPNSTTAEQ) is disordered. A compositionally biased stretch (polar residues) spans 494–504 (SVGNHPNSTTA). N-linked (GlcNAc...) asparagine glycosylation is present at asparagine 500. A helical transmembrane segment spans residues 523–543 (SGEVALVVVAIAAAVWGFFIW). The Cytoplasmic portion of the chain corresponds to 544–641 (RSRRQRQGSG…PSNMPSSSSS (98 aa)). The disordered stretch occupies residues 593-641 (LDTLRGTDDRSRGANGHGSVGGDSEDEDEKFGAQKESYHPSNMPSSSSS). A compositionally biased stretch (basic and acidic residues) spans 594–604 (DTLRGTDDRSR). Polar residues predominate over residues 631–641 (HPSNMPSSSSS).

The protein belongs to the peptidase S10 family.

The protein localises to the golgi apparatus. The protein resides in the trans-Golgi network membrane. It catalyses the reaction Preferential release of a C-terminal arginine or lysine residue.. Its function is as follows. Protease with a carboxypeptidase B-like function involved in the C-terminal processing of the lysine and arginine residues from protein precursors. Promotes cell fusion and is involved in the programmed cell death. The chain is Pheromone-processing carboxypeptidase KEX1 (KEX1) from Coccidioides posadasii (strain C735) (Valley fever fungus).